The primary structure comprises 518 residues: MSDYLLQMNGIVKSFGGVKALNGIDITVKPGECVGLCGENGAGKSTLMKVLSAVYPYGTWEGEILWDGQPLKAQSISETEAAGIVIIHQELTLVPDLSVAENIFMGHELTLPGGRMNYPAMMHRAESLMRELKVPDMNVALPVSQYGGGYQQLVEIAKALNKKARLLILDEPSSALTRSEIEVLLDIIHDLKAKGVACVYISHKLDEVAAVCDTVSVIRDGKHIATTAMADMDIPKIITQMVGREMSNLYPTEPHDVGEVIFEARHITCYDVDNPRRKRVDDVSFLLRRGEILGIAGLVGAGRTELVSALFGAYPGRYSGEVWLNGQAIDTRTPLKSIRAGVCMVPEDRKRQGIIPDLGVGQNITLAVLDSYSNMTRIDAEAELGSIDREISRMHLKTASPFLPITSLSGGNQQKAVLAKMLLTRPRVLILDEPTRGVDVGAKYEIYKLMGALAAEGVSIIMVSSELAEVLGVSDRVLVIGDGQLRGDFINHDLTQEQVLAAALSHSDAPHNNARKTA.

ABC transporter domains lie at 6 to 245 (LQMN…VGRE) and 262 to 507 (FEAR…LSHS). Position 38 to 45 (38 to 45 (GENGAGKS)) interacts with ATP.

It belongs to the ABC transporter superfamily. Xylose importer (TC 3.A.1.2.4) family. The complex is composed of two ATP-binding proteins (XylG), two transmembrane proteins (XylH) and a solute-binding protein (XylF).

The protein localises to the cell inner membrane. It carries out the reaction D-xylose(out) + ATP + H2O = D-xylose(in) + ADP + phosphate + H(+). Functionally, part of the ABC transporter complex XylFGH involved in xylose import. Responsible for energy coupling to the transport system. This Pseudomonas syringae pv. syringae (strain B728a) protein is Xylose import ATP-binding protein XylG.